Here is a 411-residue protein sequence, read N- to C-terminus: Ornithine cyclodeaminase (411 aa).

Residues Asn236, Ala237, Asp315, Thr347, Met348, Leu349, His350, Asp368, Asp391, and Val392 each contribute to the NAD(+) site.

This sequence belongs to the AgrE/ArgZ ornithine cyclodeaminase family. The cofactor is NAD(+).

It catalyses the reaction L-ornithine = L-proline + NH4(+). Catalyzes the conversion of ornithine to proline, with the release of ammonia. This is Ornithine cyclodeaminase from Methanothermobacter thermautotrophicus (strain ATCC 29096 / DSM 1053 / JCM 10044 / NBRC 100330 / Delta H) (Methanobacterium thermoautotrophicum).